The following is a 111-amino-acid chain: uncharacterized protein (111 aa).

The HIT domain maps to 8 to 111; the sequence is LFLKIIKREE…HVHIIPYYKK (104 aa). The Histidine triad motif motif lies at 100–104; it reads HTHVH.

This is an uncharacterized protein from Mesomycoplasma hyorhinis (Mycoplasma hyorhinis).